Reading from the N-terminus, the 486-residue chain is Serralysin (486 aa).

His-187 contributes to the Zn(2+) binding site. Glu-188 is an active-site residue. The Zn(2+) site is built by His-191 and His-197. Arg-266, Asp-269, Asp-298, Gly-300, Gly-301, Asp-303, Thr-340, and Glu-342 together coordinate Ca(2+). Hemolysin-type calcium-binding repeat units lie at residues Ile-345–Leu-362 and Lys-363–Leu-380.

This sequence belongs to the peptidase M10B family. It depends on Zn(2+) as a cofactor. Ca(2+) is required as a cofactor.

It localises to the secreted. The enzyme catalyses Preferential cleavage of bonds with hydrophobic residues in P1'.. In Photorhabdus luminescens (Xenorhabdus luminescens), this protein is Serralysin (prtA1).